A 367-amino-acid chain; its full sequence is Cytochrome b (367 aa).

4 helical membrane passes run Met-20–Met-40, Trp-64–Ile-85, Trp-101–Leu-121, and Phe-166–Ile-186. 2 residues coordinate heme b: His-70 and His-84. His-170 and His-184 together coordinate heme b. Residue His-189 participates in a ubiquinone binding. 4 consecutive transmembrane segments (helical) span residues Ile-214–Ser-234, Leu-276–Ser-296, Ile-308–Ala-328, and Tyr-335–Met-355.

Belongs to the cytochrome b family. In terms of assembly, the main subunits of complex b-c1 are: cytochrome b, cytochrome c1 and the Rieske protein. It depends on heme b as a cofactor.

It localises to the mitochondrion inner membrane. In terms of biological role, component of the ubiquinol-cytochrome c reductase complex (complex III or cytochrome b-c1 complex) that is part of the mitochondrial respiratory chain. The b-c1 complex mediates electron transfer from ubiquinol to cytochrome c. Contributes to the generation of a proton gradient across the mitochondrial membrane that is then used for ATP synthesis. In Albinaria caerulea (Land snail), this protein is Cytochrome b (MT-CYB).